A 353-amino-acid chain; its full sequence is Anthranilate phosphoribosyltransferase (353 aa).

5-phospho-alpha-D-ribose 1-diphosphate is bound by residues glycine 86, 89–90 (GD), 96–99 (NVST), 114–122 (KHGNRAVSG), and serine 126. Glycine 86 provides a ligand contact to anthranilate. Serine 98 serves as a coordination point for Mg(2+). Asparagine 117 is a binding site for anthranilate. Arginine 172 provides a ligand contact to anthranilate. Positions 231 and 232 each coordinate Mg(2+).

It belongs to the anthranilate phosphoribosyltransferase family. As to quaternary structure, homodimer. Mg(2+) serves as cofactor.

It catalyses the reaction N-(5-phospho-beta-D-ribosyl)anthranilate + diphosphate = 5-phospho-alpha-D-ribose 1-diphosphate + anthranilate. It functions in the pathway amino-acid biosynthesis; L-tryptophan biosynthesis; L-tryptophan from chorismate: step 2/5. Functionally, catalyzes the transfer of the phosphoribosyl group of 5-phosphorylribose-1-pyrophosphate (PRPP) to anthranilate to yield N-(5'-phosphoribosyl)-anthranilate (PRA). In Pseudomonas syringae pv. syringae (strain B728a), this protein is Anthranilate phosphoribosyltransferase.